A 901-amino-acid polypeptide reads, in one-letter code: Aconitate hydratase A (901 aa).

[4Fe-4S] cluster is bound by residues C443, C509, and C512.

It belongs to the aconitase/IPM isomerase family. As to quaternary structure, monomer. The cofactor is [4Fe-4S] cluster.

The catalysed reaction is citrate = D-threo-isocitrate. It carries out the reaction (2S,3R)-3-hydroxybutane-1,2,3-tricarboxylate = 2-methyl-cis-aconitate + H2O. It participates in carbohydrate metabolism; tricarboxylic acid cycle; isocitrate from oxaloacetate: step 2/2. It functions in the pathway organic acid metabolism; propanoate degradation. Its function is as follows. Involved in the catabolism of short chain fatty acids (SCFA) via the tricarboxylic acid (TCA)(acetyl degradation route) and probably the 2-methylcitrate cycle I (propionate degradation route). Catalyzes the reversible isomerization of citrate to isocitrate via cis-aconitate. Could catalyze the hydration of 2-methyl-cis-aconitate to yield (2R,3S)-2-methylisocitrate. The apo form of AcnA functions as a RNA-binding regulatory protein. This Staphylococcus aureus (strain COL) protein is Aconitate hydratase A (acnA).